The sequence spans 516 residues: Bifunctional purine biosynthesis protein PurH (516 aa).

The 149-residue stretch at 1–149 (MSERQPIRRA…KNHANVAVLT (149 aa)) folds into the MGS-like domain.

It belongs to the PurH family.

The enzyme catalyses (6R)-10-formyltetrahydrofolate + 5-amino-1-(5-phospho-beta-D-ribosyl)imidazole-4-carboxamide = 5-formamido-1-(5-phospho-D-ribosyl)imidazole-4-carboxamide + (6S)-5,6,7,8-tetrahydrofolate. It carries out the reaction IMP + H2O = 5-formamido-1-(5-phospho-D-ribosyl)imidazole-4-carboxamide. It participates in purine metabolism; IMP biosynthesis via de novo pathway; 5-formamido-1-(5-phospho-D-ribosyl)imidazole-4-carboxamide from 5-amino-1-(5-phospho-D-ribosyl)imidazole-4-carboxamide (10-formyl THF route): step 1/1. Its pathway is purine metabolism; IMP biosynthesis via de novo pathway; IMP from 5-formamido-1-(5-phospho-D-ribosyl)imidazole-4-carboxamide: step 1/1. The chain is Bifunctional purine biosynthesis protein PurH from Cutibacterium acnes (strain DSM 16379 / KPA171202) (Propionibacterium acnes).